Consider the following 290-residue polypeptide: N-acetylmannosamine kinase (290 aa).

ATP contacts are provided by residues alanine 6–lysine 13 and glycine 132–leucine 139. Positions 156, 166, 168, and 173 each coordinate Zn(2+).

Belongs to the ROK (NagC/XylR) family. NanK subfamily. In terms of assembly, homodimer.

The enzyme catalyses an N-acyl-D-mannosamine + ATP = an N-acyl-D-mannosamine 6-phosphate + ADP + H(+). The protein operates within amino-sugar metabolism; N-acetylneuraminate degradation; D-fructose 6-phosphate from N-acetylneuraminate: step 2/5. Its function is as follows. Catalyzes the phosphorylation of N-acetylmannosamine (ManNAc) to ManNAc-6-P. The chain is N-acetylmannosamine kinase from Yersinia pseudotuberculosis serotype O:1b (strain IP 31758).